A 317-amino-acid chain; its full sequence is UV DNA damage endonuclease (317 aa).

Belongs to the uve1/UvsE family.

Its function is as follows. Component in a DNA repair pathway. Removal of UV LIGHT damaged nucleotides. Recognizes pyrimidine dimers and cleave a phosphodiester bond immediately 5' to the lesion. The sequence is that of UV DNA damage endonuclease from Bacillus cereus (strain ATCC 10987 / NRS 248).